The following is a 401-amino-acid chain: S-adenosylmethionine synthase (401 aa).

Glycine 135 to aspartate 140 serves as a coordination point for ATP.

The protein belongs to the AdoMet synthase 2 family. Mg(2+) serves as cofactor.

The catalysed reaction is L-methionine + ATP + H2O = S-adenosyl-L-methionine + phosphate + diphosphate. Its pathway is amino-acid biosynthesis; S-adenosyl-L-methionine biosynthesis; S-adenosyl-L-methionine from L-methionine: step 1/1. Functionally, catalyzes the formation of S-adenosylmethionine from methionine and ATP. This chain is S-adenosylmethionine synthase, found in Methanobrevibacter smithii (strain ATCC 35061 / DSM 861 / OCM 144 / PS).